Consider the following 198-residue polypeptide: Elongation factor Ts (198 aa).

Residues 81-84 (TDFV) are involved in Mg(2+) ion dislocation from EF-Tu.

This sequence belongs to the EF-Ts family.

The protein resides in the cytoplasm. Its function is as follows. Associates with the EF-Tu.GDP complex and induces the exchange of GDP to GTP. It remains bound to the aminoacyl-tRNA.EF-Tu.GTP complex up to the GTP hydrolysis stage on the ribosome. The polypeptide is Elongation factor Ts (Herpetosiphon aurantiacus (strain ATCC 23779 / DSM 785 / 114-95)).